We begin with the raw amino-acid sequence, 967 residues long: Phosphoenolpyruvate carboxylase (967 aa).

Serine 11 carries the phosphoserine modification. Active-site residues include histidine 172 and lysine 601.

Belongs to the PEPCase type 1 family. In terms of assembly, homotetramer. The cofactor is Mg(2+).

It is found in the cytoplasm. The enzyme catalyses oxaloacetate + phosphate = phosphoenolpyruvate + hydrogencarbonate. The protein operates within photosynthesis; C3 acid pathway. With respect to regulation, by light-reversible phosphorylation. Through the carboxylation of phosphoenolpyruvate (PEP) it forms oxaloacetate, a four-carbon dicarboxylic acid source for the tricarboxylic acid cycle. This is Phosphoenolpyruvate carboxylase (PPCA1) from Flaveria pringlei.